A 302-amino-acid polypeptide reads, in one-letter code: tRNA dimethylallyltransferase (302 aa).

7–14 (GPTASGKS) serves as a coordination point for ATP. 9–14 (TASGKS) is a binding site for substrate. 2 interaction with substrate tRNA regions span residues 32 to 35 (DSMQ) and 156 to 160 (QRILR).

It belongs to the IPP transferase family. In terms of assembly, monomer. Mg(2+) serves as cofactor.

It carries out the reaction adenosine(37) in tRNA + dimethylallyl diphosphate = N(6)-dimethylallyladenosine(37) in tRNA + diphosphate. In terms of biological role, catalyzes the transfer of a dimethylallyl group onto the adenine at position 37 in tRNAs that read codons beginning with uridine, leading to the formation of N6-(dimethylallyl)adenosine (i(6)A). This Beijerinckia indica subsp. indica (strain ATCC 9039 / DSM 1715 / NCIMB 8712) protein is tRNA dimethylallyltransferase.